The following is a 444-amino-acid chain: Gentisate transporter (444 aa).

12 helical membrane-spanning segments follow: residues 42-64 (AAVLIGWFFVIFDGYDLIVYGTV), 79-101 (LGTIGSTAFFGMAIGAVFIGRLS), 108-127 (AAVIGSVLILSVFTMLCAFA), 131-153 (WVFGAFRFIAGLGLGGLVPSVNA), 166-188 (AWATVMMSGVPIGGSIAAVLALV), 198-220 (WRFMFLIALIPLVVGLPIAMKVI), 252-274 (WISIWFALATFVTLLAWYGLGTW), 289-311 (ALMFTLALNLGAVIGSVVTAWAG), 318-340 (RSGVIAAGIAGIALLLLLTYPPV), 344-366 (YVILILAGVGTHGTQILIIAAVA), 378-400 (LGWALGVGRIGAVVAPQLAGLLL), and 410-428 (FIMFGTAALLSALALSVLL).

It belongs to the major facilitator superfamily. Aromatic acid:H(+) symporter (AAHS) (TC 2.A.1.15) family.

Its subcellular location is the cell membrane. Transport of gentisate (2,5-dihydroxybenzoate) into the cell. Does not transport 3-hydroxybenzoate or benzoate. This chain is Gentisate transporter (genK), found in Corynebacterium glutamicum (strain ATCC 13032 / DSM 20300 / JCM 1318 / BCRC 11384 / CCUG 27702 / LMG 3730 / NBRC 12168 / NCIMB 10025 / NRRL B-2784 / 534).